The primary structure comprises 273 residues: DnaJ homolog subfamily C member 27 (273 aa).

Residues 1-18 (METNVPKRKEPAKSLRIK) form a required for interaction with MAPK1 region. GTP contacts are provided by residues 23–30 (GNAEVGKS), 71–75 (DMAGH), and 134–137 (NKID). In terms of domain architecture, J spans 217–273 (DSWEMLGVRPGASREEVNKAYRKLAVLLHPDKCVAPGSEDAFKAVVNARTALLKNIK).

It belongs to the small GTPase superfamily. Rab family. In terms of assembly, interacts directly with MAPK1 (wild-type and kinase-deficient forms). Interacts directly (in GTP-bound form) with MAP2K1 (wild-type and kinase-deficient forms).

The protein resides in the nucleus. Its function is as follows. GTPase which can activate the MEK/ERK pathway and induce cell transformation when overexpressed. May act as a nuclear scaffold for MAPK1, probably by association with MAPK1 nuclear export signal leading to enhanced ERK1/ERK2 signaling. The chain is DnaJ homolog subfamily C member 27 (Dnajc27) from Mus musculus (Mouse).